The following is a 423-amino-acid chain: Glucose-1-phosphate adenylyltransferase 1 (423 aa).

Alpha-D-glucose 1-phosphate contacts are provided by residues Tyr-111, Gly-176, 191–192, and Ser-209; that span reads EK.

Belongs to the bacterial/plant glucose-1-phosphate adenylyltransferase family. As to quaternary structure, homotetramer.

The catalysed reaction is alpha-D-glucose 1-phosphate + ATP + H(+) = ADP-alpha-D-glucose + diphosphate. It participates in glycan biosynthesis; glycogen biosynthesis. Involved in the biosynthesis of ADP-glucose, a building block required for the elongation reactions to produce glycogen. Catalyzes the reaction between ATP and alpha-D-glucose 1-phosphate (G1P) to produce pyrophosphate and ADP-Glc. The chain is Glucose-1-phosphate adenylyltransferase 1 from Alkalilimnicola ehrlichii (strain ATCC BAA-1101 / DSM 17681 / MLHE-1).